A 64-amino-acid chain; its full sequence is MPKMKSHRGACKRFKATASGKIKHERMNGSHNLEKKNRKRSRRLHQATILDSAKEKQIRRMILA.

The disordered stretch occupies residues 27–47; sequence MNGSHNLEKKNRKRSRRLHQA. Positions 36 to 45 are enriched in basic residues; sequence KNRKRSRRLH.

The protein belongs to the bacterial ribosomal protein bL35 family.

The sequence is that of Large ribosomal subunit protein bL35 from Chlorobium phaeobacteroides (strain DSM 266 / SMG 266 / 2430).